Here is a 194-residue protein sequence, read N- to C-terminus: Leucyl/phenylalanyl-tRNA--protein transferase (194 aa).

It belongs to the L/F-transferase family.

Its subcellular location is the cytoplasm. The enzyme catalyses N-terminal L-lysyl-[protein] + L-leucyl-tRNA(Leu) = N-terminal L-leucyl-L-lysyl-[protein] + tRNA(Leu) + H(+). It catalyses the reaction N-terminal L-arginyl-[protein] + L-leucyl-tRNA(Leu) = N-terminal L-leucyl-L-arginyl-[protein] + tRNA(Leu) + H(+). The catalysed reaction is L-phenylalanyl-tRNA(Phe) + an N-terminal L-alpha-aminoacyl-[protein] = an N-terminal L-phenylalanyl-L-alpha-aminoacyl-[protein] + tRNA(Phe). Its function is as follows. Functions in the N-end rule pathway of protein degradation where it conjugates Leu, Phe and, less efficiently, Met from aminoacyl-tRNAs to the N-termini of proteins containing an N-terminal arginine or lysine. The sequence is that of Leucyl/phenylalanyl-tRNA--protein transferase from Prosthecochloris aestuarii (strain DSM 271 / SK 413).